Reading from the N-terminus, the 367-residue chain is Anthranilate phosphoribosyltransferase (367 aa).

The segment covering 1-17 (MVLSSEASSAADHSAAA) has biased composition (low complexity). The segment at 1 to 22 (MVLSSEASSAADHSAAAPIPTS) is disordered. Residues glycine 104, 107 to 108 (GD), threonine 112, 114 to 117 (NLST), 132 to 140 (KHGNRAASS), and glycine 144 contribute to the 5-phospho-alpha-D-ribose 1-diphosphate site. Anthranilate is bound at residue glycine 104. Serine 116 contributes to the Mg(2+) binding site. Asparagine 135 lines the anthranilate pocket. Arginine 190 serves as a coordination point for anthranilate. Positions 248 and 249 each coordinate Mg(2+).

This sequence belongs to the anthranilate phosphoribosyltransferase family. As to quaternary structure, homodimer. It depends on Mg(2+) as a cofactor.

It catalyses the reaction N-(5-phospho-beta-D-ribosyl)anthranilate + diphosphate = 5-phospho-alpha-D-ribose 1-diphosphate + anthranilate. The protein operates within amino-acid biosynthesis; L-tryptophan biosynthesis; L-tryptophan from chorismate: step 2/5. Its function is as follows. Catalyzes the transfer of the phosphoribosyl group of 5-phosphorylribose-1-pyrophosphate (PRPP) to anthranilate to yield N-(5'-phosphoribosyl)-anthranilate (PRA). This Mycobacterium ulcerans (strain Agy99) protein is Anthranilate phosphoribosyltransferase.